The sequence spans 254 residues: Alcohol dehydrogenase (254 aa).

10–33 (FVAGLGGIGLDTSRELVKRNLKNL) provides a ligand contact to NAD(+). Substrate is bound at residue serine 138. The Proton acceptor role is filled by tyrosine 151.

It belongs to the short-chain dehydrogenases/reductases (SDR) family. Homodimer.

It catalyses the reaction a primary alcohol + NAD(+) = an aldehyde + NADH + H(+). The enzyme catalyses a secondary alcohol + NAD(+) = a ketone + NADH + H(+). The chain is Alcohol dehydrogenase (Adh) from Drosophila pseudoobscura pseudoobscura (Fruit fly).